Here is a 183-residue protein sequence, read N- to C-terminus: uncharacterized protein (183 aa).

This sequence belongs to the isochorismatase family.

This is an uncharacterized protein from Bacillus subtilis (strain 168).